A 134-amino-acid polypeptide reads, in one-letter code: Crustacean hyperglycemic hormones isoform A (134 aa).

A signal peptide spans 1 to 24; sequence MMACRTLCLVVVMVASLGTSGVGG. Gln-61 bears the Pyrrolidone carboxylic acid mark. A D-phenylalanine; in form CHH-A-II modification is found at Phe-63. 3 cysteine pairs are disulfide-bonded: Cys-67–Cys-103, Cys-83–Cys-99, and Cys-86–Cys-112. Residue Val-132 is modified to Valine amide.

Belongs to the arthropod CHH/MIH/GIH/VIH hormone family. In terms of processing, stereoinversion of L-Phe (form CHH-A-I) to D-Phe (form CHH-A-II). As to expression, produced by the medulla terminalis X-organ in the eyestalks and transported to the sinus gland where they are stored and released. Present also in the ventral nervous system.

The protein resides in the secreted. In terms of biological role, CHH is the most abundant hormone in the sinus gland of isopods and decapods which controls the blood sugar level. Has a secretagogue action over the amylase released from the midgut gland. May act as a stress hormone. MIH may inhibit Y-organs where molting hormone (ecdysteroid) is secreted and a molting cycle is initiated when MIH secretion diminishes or stops. The polypeptide is Crustacean hyperglycemic hormones isoform A (Homarus americanus (American lobster)).